The following is a 147-amino-acid chain: 16 kDa heat shock protein B (147 aa).

Residues 29 to 141 (NEAGSTYPPY…APSAFRSAAA (113 aa)) form the sHSP domain.

This sequence belongs to the small heat shock protein (HSP20) family.

The sequence is that of 16 kDa heat shock protein B (ibpB) from Azotobacter vinelandii.